Here is a 191-residue protein sequence, read N- to C-terminus: Protein YceI (191 aa).

Positions 1 to 22 (MKKSLLGLTFASLMFSAGSAVA) are cleaved as a signal peptide.

Belongs to the UPF0312 family. Type 1 subfamily.

The protein localises to the periplasm. The polypeptide is Protein YceI (Shigella boydii serotype 4 (strain Sb227)).